A 350-amino-acid chain; its full sequence is Holliday junction branch migration complex subunit RuvB (350 aa).

Residues T4–Y184 are large ATPase domain (RuvB-L). ATP contacts are provided by residues I23, R24, G65, K68, T69, T70, E131–Y133, R174, Y184, and R221. Residue T69 participates in Mg(2+) binding. Residues A185–H255 form a small ATPAse domain (RuvB-S) region. Positions R258–A350 are head domain (RuvB-H). The DNA site is built by R294, R313, and R318.

The protein belongs to the RuvB family. In terms of assembly, homohexamer. Forms an RuvA(8)-RuvB(12)-Holliday junction (HJ) complex. HJ DNA is sandwiched between 2 RuvA tetramers; dsDNA enters through RuvA and exits via RuvB. An RuvB hexamer assembles on each DNA strand where it exits the tetramer. Each RuvB hexamer is contacted by two RuvA subunits (via domain III) on 2 adjacent RuvB subunits; this complex drives branch migration. In the full resolvosome a probable DNA-RuvA(4)-RuvB(12)-RuvC(2) complex forms which resolves the HJ.

It localises to the cytoplasm. The catalysed reaction is ATP + H2O = ADP + phosphate + H(+). Its function is as follows. The RuvA-RuvB-RuvC complex processes Holliday junction (HJ) DNA during genetic recombination and DNA repair, while the RuvA-RuvB complex plays an important role in the rescue of blocked DNA replication forks via replication fork reversal (RFR). RuvA specifically binds to HJ cruciform DNA, conferring on it an open structure. The RuvB hexamer acts as an ATP-dependent pump, pulling dsDNA into and through the RuvAB complex. RuvB forms 2 homohexamers on either side of HJ DNA bound by 1 or 2 RuvA tetramers; 4 subunits per hexamer contact DNA at a time. Coordinated motions by a converter formed by DNA-disengaged RuvB subunits stimulates ATP hydrolysis and nucleotide exchange. Immobilization of the converter enables RuvB to convert the ATP-contained energy into a lever motion, pulling 2 nucleotides of DNA out of the RuvA tetramer per ATP hydrolyzed, thus driving DNA branch migration. The RuvB motors rotate together with the DNA substrate, which together with the progressing nucleotide cycle form the mechanistic basis for DNA recombination by continuous HJ branch migration. Branch migration allows RuvC to scan DNA until it finds its consensus sequence, where it cleaves and resolves cruciform DNA. This Chromohalobacter salexigens (strain ATCC BAA-138 / DSM 3043 / CIP 106854 / NCIMB 13768 / 1H11) protein is Holliday junction branch migration complex subunit RuvB.